Reading from the N-terminus, the 106-residue chain is Pyrimidine/purine nucleoside phosphorylase (106 aa).

This sequence belongs to the nucleoside phosphorylase PpnP family.

The catalysed reaction is a purine D-ribonucleoside + phosphate = a purine nucleobase + alpha-D-ribose 1-phosphate. It carries out the reaction adenosine + phosphate = alpha-D-ribose 1-phosphate + adenine. The enzyme catalyses cytidine + phosphate = cytosine + alpha-D-ribose 1-phosphate. It catalyses the reaction guanosine + phosphate = alpha-D-ribose 1-phosphate + guanine. The catalysed reaction is inosine + phosphate = alpha-D-ribose 1-phosphate + hypoxanthine. It carries out the reaction thymidine + phosphate = 2-deoxy-alpha-D-ribose 1-phosphate + thymine. The enzyme catalyses uridine + phosphate = alpha-D-ribose 1-phosphate + uracil. It catalyses the reaction xanthosine + phosphate = alpha-D-ribose 1-phosphate + xanthine. Catalyzes the phosphorolysis of diverse nucleosides, yielding D-ribose 1-phosphate and the respective free bases. Can use uridine, adenosine, guanosine, cytidine, thymidine, inosine and xanthosine as substrates. Also catalyzes the reverse reactions. The chain is Pyrimidine/purine nucleoside phosphorylase from Burkholderia cenocepacia (strain ATCC BAA-245 / DSM 16553 / LMG 16656 / NCTC 13227 / J2315 / CF5610) (Burkholderia cepacia (strain J2315)).